The sequence spans 72 residues: Exodeoxyribonuclease 7 small subunit (72 aa).

The protein belongs to the XseB family. Heterooligomer composed of large and small subunits.

Its subcellular location is the cytoplasm. The enzyme catalyses Exonucleolytic cleavage in either 5'- to 3'- or 3'- to 5'-direction to yield nucleoside 5'-phosphates.. Bidirectionally degrades single-stranded DNA into large acid-insoluble oligonucleotides, which are then degraded further into small acid-soluble oligonucleotides. In Chlamydia trachomatis serovar A (strain ATCC VR-571B / DSM 19440 / HAR-13), this protein is Exodeoxyribonuclease 7 small subunit.